Consider the following 206-residue polypeptide: Heterochromatin protein 1 (206 aa).

Disordered regions lie at residues 1-24 and 47-145; these read MGKK…EEEY and GYPE…GFDR. Phosphoserine is present on residues Ser-11 and Ser-15. Residues 24-82 form the Chromo 1 domain; the sequence is YAVEKIIDRRVRKGKVEYYLKWKGYPETENTWEPENNLDCQDLIQQYEASRKDEEKSAA. Low complexity predominate over residues 50–60; it reads ETENTWEPENN. Residues 72 to 98 show a composition bias toward basic and acidic residues; that stretch reads ASRKDEEKSAASKKDRPSSSAKAKETQ. Positions 95–206 are binds to Su(var)39; it reads KETQGRASSS…RLSWYSDNED (112 aa). Ser-102, Ser-103, and Ser-113 each carry phosphoserine. 3 positions are modified to phosphothreonine: Thr-127, Thr-128, and Thr-134. The 59-residue stretch at 147–205 folds into the Chromo 2 domain; that stretch reads LEAEKILGASDNNGRLTFLIQFKGVDQAEMVPSSVANEKIPRMVIHFYEERLSWYSDNE.

Homodimer. Probably associates with Su(var)3-9. Interacts with Mcm10. Interacts (via chromoshadow domain) with piwi (via N-terminal region). Interacts with Rrp6. Associates with and may be part of the HipHop-HOAP telomere capping complex but is not required for its stability or telomere localization. Interacts (via the chromo domain 2 (chromoshadow domain) and the hinge region between chromo domains 1 and 2) with cav/HOAP (via C-terminus); the interaction is direct. Each molecule of cav/HOAP interacts with 2 molecules of Su(var)205/HP1. Interacts with HipHop (via N-terminus). Interacts with moi/modigliani; the interaction is direct. Interacts (via chromo domain 1) with His3/histone 3 (via N-terminal tail methylated at 'Lys-10'); the interaction is direct. As to expression, salivary gland (at protein level).

It is found in the nucleus. Its subcellular location is the nucleoplasm. The protein localises to the chromosome. It localises to the telomere. Its function is as follows. Structural component of heterochromatin, involved in gene repression and the modification of position-effect-variegation. Recognizes and binds histone H3 tails methylated at 'Lys-9', leading to epigenetic repression. Stabilizes chromatin-associated RNAs probably by binding to them and thereby preventing their degradation. Associates with, and may be a part of, the HipHop-HOAP complex that recruits the MTV complex to form the terminin telomere-capping complex, which binds to chromosome ends in a sequence-independent manner and prevents telomere fusion. Telomere capping is independent of the origin recognition complex (ORC). The polypeptide is Heterochromatin protein 1 (Drosophila melanogaster (Fruit fly)).